The chain runs to 357 residues: Actin, macronuclear (357 aa).

Belongs to the actin family. In terms of processing, met-1 may be removed after translation.

The protein resides in the cytoplasm. It localises to the cytoskeleton. The enzyme catalyses ATP + H2O = ADP + phosphate + H(+). Actins are highly conserved proteins that are involved in various types of cell motility and are ubiquitously expressed in all eukaryotic cells. This chain is Actin, macronuclear, found in Oxytricha fallax.